We begin with the raw amino-acid sequence, 602 residues long: ATP-dependent DNA helicase II subunit 1 (602 aa).

Residues 268–483 form the Ku domain; that stretch reads FQCPLILDEK…YDNMKKVTQS (216 aa). 3 positions are modified to phosphoserine: S370, S371, and S372.

The protein belongs to the ku70 family. As to quaternary structure, heterodimer of YKU70/HDF1 and YKU80/HDF2. Post-translationally, sumoylated by MMS21.

It localises to the nucleus. The protein resides in the chromosome. Its subcellular location is the telomere. It catalyses the reaction ATP + H2O = ADP + phosphate + H(+). Its function is as follows. Single-stranded DNA-dependent ATP-dependent helicase. Involved in non-homologous end joining (NHEJ) DNA double strand break repair. DNA-binding is sequence-independent but has a high affinity to nicks in double-stranded DNA and to the ends of duplex DNA. Binds to naturally occurring chromosomal ends, and therefore provides chromosomal end protection. Appears to have a role in recruitment of telomerase and CDC13 to the telomere and the subsequent telomere elongation. Required also for telomere recombination to repair telomeric ends in the absence of telomerase. KU70, of the KU70/KU80 heterodimer, binds to the stem loop of TLC1, the RNA component of telomerase. Involved in telomere maintenance. Interacts with telomeric repeats and subtelomeric sequences thereby controlling telomere length and protecting against subtelomeric rearrangement. Maintains telomeric chromatin, which is involved in silencing the expression of genes located at the telomere. Required for mating-type switching. This Saccharomyces cerevisiae (strain ATCC 204508 / S288c) (Baker's yeast) protein is ATP-dependent DNA helicase II subunit 1 (YKU70).